The primary structure comprises 548 residues: Luciferin 4-monooxygenase (548 aa).

The Microbody targeting signal motif lies at 546-548 (AKM).

It belongs to the ATP-dependent AMP-binding enzyme family. Requires Mg(2+) as cofactor.

It is found in the peroxisome. It catalyses the reaction firefly D-luciferin + ATP + O2 = firefly oxyluciferin + hnu + AMP + CO2 + diphosphate. Produces green light with a wavelength of 544 nm. The polypeptide is Luciferin 4-monooxygenase (Nipponoluciola cruciata (Genji firefly)).